The following is a 213-amino-acid chain: Cytochrome c biogenesis ATP-binding export protein CcmA (213 aa).

The ABC transporter domain maps to 8–213; that stretch reads LQATALTCER…RDIDLGQWAA (206 aa). An ATP-binding site is contributed by 40–47; sequence GPNGSGKT.

It belongs to the ABC transporter superfamily. CcmA exporter (TC 3.A.1.107) family. In terms of assembly, the complex is composed of two ATP-binding proteins (CcmA) and two transmembrane proteins (CcmB).

The protein resides in the cell inner membrane. The enzyme catalyses heme b(in) + ATP + H2O = heme b(out) + ADP + phosphate + H(+). Part of the ABC transporter complex CcmAB involved in the biogenesis of c-type cytochromes; once thought to export heme, this seems not to be the case, but its exact role is uncertain. Responsible for energy coupling to the transport system. This is Cytochrome c biogenesis ATP-binding export protein CcmA from Pseudomonas savastanoi pv. phaseolicola (strain 1448A / Race 6) (Pseudomonas syringae pv. phaseolicola (strain 1448A / Race 6)).